Here is a 64-residue protein sequence, read N- to C-terminus: MSETITVNCPTCGKTVVWGEISPFRPFCSKRCQLIDLGEWAAEEKRIPSSGDLSESDDWSEEPK.

Residues cysteine 9, cysteine 12, cysteine 28, and cysteine 32 each coordinate Zn(2+). Residues 45 to 64 are disordered; that stretch reads KRIPSSGDLSESDDWSEEPK. Over residues 54-64 the composition is skewed to acidic residues; the sequence is SESDDWSEEPK.

This sequence belongs to the DNA gyrase inhibitor YacG family. Interacts with GyrB. The cofactor is Zn(2+).

Its function is as follows. Inhibits all the catalytic activities of DNA gyrase by preventing its interaction with DNA. Acts by binding directly to the C-terminal domain of GyrB, which probably disrupts DNA binding by the gyrase. This Escherichia fergusonii (strain ATCC 35469 / DSM 13698 / CCUG 18766 / IAM 14443 / JCM 21226 / LMG 7866 / NBRC 102419 / NCTC 12128 / CDC 0568-73) protein is DNA gyrase inhibitor YacG.